Consider the following 90-residue polypeptide: DNA/RNA-binding protein Alba (90 aa).

Lys-8 bears the N6-acetyllysine mark.

The protein belongs to the histone-like Alba family. Acetylated. Acetylation at Lys-8 decreases DNA-binding affinity.

It localises to the cytoplasm. Its subcellular location is the chromosome. Its function is as follows. Binds double-stranded DNA tightly but without sequence specificity. Involved in DNA compaction. The sequence is that of DNA/RNA-binding protein Alba from Nanoarchaeum equitans (strain Kin4-M).